The primary structure comprises 766 residues: Serine/threonine-protein kinase DCLK2 (766 aa).

The segment at 1–45 is disordered; sequence MASTRSIELEHFEERDKRPRPGSRRGAPSSSGGSSSSGPKGNGLI. The span at 7 to 19 shows a compositional bias: basic and acidic residues; the sequence is IELEHFEERDKRP. Over residues 24–39 the composition is skewed to low complexity; it reads RRGAPSSSGGSSSSGP. T61 carries the post-translational modification Phosphothreonine. Doublecortin domains lie at 72 to 158 and 197 to 280; these read KKAR…VDYT and KLVT…AQDD. Low complexity-rich tracts occupy residues 300 to 312 and 324 to 347; these read AVKY…PGPS and TPSS…SPGS. The interval 300–378 is disordered; it reads AVKYSGSKSP…ELDRCISPEG (79 aa). S362 is modified (phosphoserine). The Protein kinase domain occupies 394-651; that stretch reads YKIGKVIGDG…AGQILSHPWV (258 aa). Residues 400 to 408 and K423 each bind ATP; that span reads IGDGNFAVV. Catalysis depends on D515, which acts as the Proton acceptor. S647 bears the Phosphoserine mark. T666 is modified (phosphothreonine). Positions 707–766 are disordered; the sequence is CQDSGRPGMEPISPVPPSVEEIPVPGEAVPAPTPPESPTPHPPPAAPGGERAGTWRRHRD. Low complexity predominate over residues 724-736; that stretch reads SVEEIPVPGEAVP. Positions 737 to 752 are enriched in pro residues; it reads APTPPESPTPHPPPAA.

Belongs to the protein kinase superfamily. CAMK Ser/Thr protein kinase family. CaMK subfamily. As to quaternary structure, binds to and stabilizes microtubules. Interacts with MAPK8IP1/JIP-1, MAPK8IP2/JIP-2, MAPK9/JNK2, PPP1R9B/NEURABIN-2 and actin. Post-translationally, autophosphorylated. In terms of tissue distribution, expressed in the brain, heart and eyes.

It localises to the cytoplasm. Its subcellular location is the cytoskeleton. The enzyme catalyses L-seryl-[protein] + ATP = O-phospho-L-seryl-[protein] + ADP + H(+). It carries out the reaction L-threonyl-[protein] + ATP = O-phospho-L-threonyl-[protein] + ADP + H(+). Its function is as follows. Protein kinase with a significantly reduced C(a2+)/CAM affinity and dependence compared to other members of the CaMK family. May play a role in the down-regulation of CRE-dependent gene activation probably by phosphorylation of the CREB coactivator CRTC2/TORC2 and the resulting retention of TORC2 in the cytoplasm. This is Serine/threonine-protein kinase DCLK2 (DCLK2) from Homo sapiens (Human).